The sequence spans 314 residues: Carbamate kinase (314 aa).

This sequence belongs to the carbamate kinase family. Homodimer.

It is found in the cytoplasm. It carries out the reaction hydrogencarbonate + NH4(+) + ATP = carbamoyl phosphate + ADP + H2O + H(+). It participates in metabolic intermediate metabolism; carbamoyl phosphate degradation; CO(2) and NH(3) from carbamoyl phosphate: step 1/1. This chain is Carbamate kinase (arcC), found in Clostridium perfringens (strain 13 / Type A).